The following is a 362-amino-acid chain: Glutaminyl-peptide cyclotransferase (362 aa).

The first 35 residues, 1-35, serve as a signal peptide directing secretion; sequence MAGSEDKRVVGTLHLLLLQATVLSLTAGNLSLVSA. N-linked (GlcNAc...) asparagine glycans are attached at residues Asn-29 and Asn-50. Cys-140 and Cys-165 are oxidised to a cystine. Asp-160 provides a ligand contact to Zn(2+). Glu-202 (proton acceptor) is an active-site residue. Glu-203 lines the Zn(2+) pocket. The active-site Proton acceptor is the Asp-249. Residue His-331 coordinates Zn(2+).

The protein belongs to the glutaminyl-peptide cyclotransferase family.

It is found in the secreted. It carries out the reaction N-terminal L-glutaminyl-[peptide] = N-terminal 5-oxo-L-prolyl-[peptide] + NH4(+). Its function is as follows. Responsible for the biosynthesis of pyroglutamyl peptides. Has a bias against acidic and tryptophan residues adjacent to the N-terminal glutaminyl residue and a lack of importance of chain length after the second residue. The chain is Glutaminyl-peptide cyclotransferase (Qpct) from Mus musculus (Mouse).